The chain runs to 573 residues: Proline--tRNA ligase (573 aa).

It belongs to the class-II aminoacyl-tRNA synthetase family. ProS type 1 subfamily. As to quaternary structure, homodimer.

Its subcellular location is the cytoplasm. The catalysed reaction is tRNA(Pro) + L-proline + ATP = L-prolyl-tRNA(Pro) + AMP + diphosphate. In terms of biological role, catalyzes the attachment of proline to tRNA(Pro) in a two-step reaction: proline is first activated by ATP to form Pro-AMP and then transferred to the acceptor end of tRNA(Pro). As ProRS can inadvertently accommodate and process non-cognate amino acids such as alanine and cysteine, to avoid such errors it has two additional distinct editing activities against alanine. One activity is designated as 'pretransfer' editing and involves the tRNA(Pro)-independent hydrolysis of activated Ala-AMP. The other activity is designated 'posttransfer' editing and involves deacylation of mischarged Ala-tRNA(Pro). The misacylated Cys-tRNA(Pro) is not edited by ProRS. The polypeptide is Proline--tRNA ligase (Elusimicrobium minutum (strain Pei191)).